A 510-amino-acid chain; its full sequence is Peroxidase 2 (510 aa).

An N-terminal signal peptide occupies residues Met1–Ala19. Residues Leu20–Ala58 constitute a propeptide that is removed on maturation. Asp228 acts as the Proton acceptor in catalysis. A heme-binding site is contributed by His362.

As to quaternary structure, homodimer. It depends on heme b as a cofactor.

Functionally, peroxidase capable of degrading beta-carotene. This chain is Peroxidase 2, found in Mycetinis scorodonius (Garlic mushroom).